We begin with the raw amino-acid sequence, 269 residues long: Protein SirB1 (269 aa).

It belongs to the UPF0162 family.

Required for maximal expression of sirC, not required to invade host cells. The protein is Protein SirB1 (sirB1) of Salmonella typhi.